The primary structure comprises 203 residues: Ras-like protein family member 10B (203 aa).

The small GTPase-like stretch occupies residues 1–203; sequence MVSTYRVAVL…ALRRNRCAIM (203 aa). 11–18 is a GTP binding site; the sequence is GARGVGKS. Positions 33-42 match the Effector region motif; that stretch reads CVPTTARRLY. Residues 59-62 and 128-131 each bind GTP; these read DFPP and NKRD. Cysteine methyl ester is present on C200. C200 carries S-geranylgeranyl cysteine lipidation. Positions 201 to 203 are cleaved as a propeptide — removed in mature form; that stretch reads AIM.

Belongs to the small GTPase superfamily. Ras family. As to quaternary structure, interacts with CADPS. As to expression, expressed at high levels in skeletal muscle and, at much lower levels, in heart, brain and pancreas.

The protein localises to the cell membrane. The catalysed reaction is GTP + H2O = GDP + phosphate + H(+). Functionally, may facilitate the release of atrial natriuretic peptide by cardiomyocytes and hence play a role in the regulation of arterial pressure. The chain is Ras-like protein family member 10B (RASL10B) from Homo sapiens (Human).